A 61-amino-acid polypeptide reads, in one-letter code: Alpha-conotoxin EIIA (61 aa).

Residues 1 to 16 (MFIVFLLVVLATTVGS) form the signal peptide. Residues 17-40 (FTLDRVLEGRNAAAIDNALDQRDP) constitute a propeptide that is removed on maturation. Position 43 is a pyrrolidone carboxylic acid (Gln-43). Pro-45 carries the post-translational modification Hydroxyproline. Cystine bridges form between Cys-47–Cys-53 and Cys-48–Cys-58. Cys-58 bears the Cysteine amide mark.

Belongs to the conotoxin A superfamily. Expressed by the venom duct.

The protein resides in the secreted. Functionally, alpha-conotoxins bind to the nicotinic acetylcholine receptors (nAChR) and inhibit them. This peptide potently blocks muscular nicotinic acetylcholine receptor (CHRNA1-CHRNB1-CHRNG-CHRND), and has no effect on neuronal receptors. It is able to totally displace [125I]-Bgtx from the Torpedo receptor with a complete inhibition in the high micromolar range. It produces a biphasic inhibition curve which fits nicely with a two-site model (Ki of 0.46 and 105 nM). This Conus ermineus (Agate cone) protein is Alpha-conotoxin EIIA.